Consider the following 242-residue polypeptide: Uridylate kinase (242 aa).

Residue 16 to 19 participates in ATP binding; that stretch reads KVSG. Residue glycine 58 coordinates UMP. Residues glycine 59 and arginine 63 each contribute to the ATP site. UMP contacts are provided by residues aspartate 78 and 139-146; that span reads TGNPFCTT. Residues threonine 166, glutamine 167, tyrosine 172, and aspartate 175 each coordinate ATP.

It belongs to the UMP kinase family. Homohexamer.

It localises to the cytoplasm. The catalysed reaction is UMP + ATP = UDP + ADP. The protein operates within pyrimidine metabolism; CTP biosynthesis via de novo pathway; UDP from UMP (UMPK route): step 1/1. With respect to regulation, inhibited by UTP. Functionally, catalyzes the reversible phosphorylation of UMP to UDP. The sequence is that of Uridylate kinase from Rickettsia canadensis (strain McKiel).